The primary structure comprises 711 residues: Polyribonucleotide nucleotidyltransferase (711 aa).

Residues aspartate 486 and aspartate 492 each contribute to the Mg(2+) site. The KH domain occupies 553–612; it reads PRIHTIKINPDKIKDVIGKGGSVIRALTEETGTTIEIEDDGTVKIAATDGEKAKHAIRRI. The region spanning 622–690 is the S1 motif domain; sequence GRVYTGKVTR…RQGRIRLSIK (69 aa). The segment at 689 to 711 is disordered; that stretch reads IKEATEQSQPAAAPEAPAAEQGE. Residues 694–711 are compositionally biased toward low complexity; it reads EQSQPAAAPEAPAAEQGE.

It belongs to the polyribonucleotide nucleotidyltransferase family. Component of the RNA degradosome, which is a multiprotein complex involved in RNA processing and mRNA degradation. It depends on Mg(2+) as a cofactor.

The protein resides in the cytoplasm. The enzyme catalyses RNA(n+1) + phosphate = RNA(n) + a ribonucleoside 5'-diphosphate. Its function is as follows. Involved in mRNA degradation. Catalyzes the phosphorolysis of single-stranded polyribonucleotides processively in the 3'- to 5'-direction. The chain is Polyribonucleotide nucleotidyltransferase from Escherichia coli (strain SE11).